Reading from the N-terminus, the 513-residue chain is Ribonuclease Y (513 aa).

Residues 4–24 (NTAIIIAITTGFVAFIGGYFL) traverse the membrane as a helical segment. A KH domain is found at 203 to 266 (TVAVIPLPNE…ETARMALEKL (64 aa)). The HD domain occupies 329–422 (VLKHSVEVAY…IQAADAISAA (94 aa)).

This sequence belongs to the RNase Y family.

It localises to the cell membrane. Its function is as follows. Endoribonuclease that initiates mRNA decay. This is Ribonuclease Y from Desulforudis audaxviator (strain MP104C).